Here is a 357-residue protein sequence, read N- to C-terminus: GTPase Obg (357 aa).

Residues 1–159 (MKFVDEAFID…KSLKLELKVL (159 aa)) enclose the Obg domain. The region spanning 160–334 (ADVGLLGMPN…LVQSIFQHVH (175 aa)) is the OBG-type G domain. Residues 166–173 (GMPNAGKS), 191–195 (FTTLH), 213–216 (DIPG), 284–287 (NKLD), and 315–317 (SAL) each bind GTP. Positions 173 and 193 each coordinate Mg(2+).

The protein belongs to the TRAFAC class OBG-HflX-like GTPase superfamily. OBG GTPase family. In terms of assembly, monomer. Requires Mg(2+) as cofactor.

Its subcellular location is the cytoplasm. Its function is as follows. An essential GTPase which binds GTP, GDP and possibly (p)ppGpp with moderate affinity, with high nucleotide exchange rates and a fairly low GTP hydrolysis rate. Plays a role in control of the cell cycle, stress response, ribosome biogenesis and in those bacteria that undergo differentiation, in morphogenesis control. The protein is GTPase Obg of Acidovorax sp. (strain JS42).